The following is a 205-amino-acid chain: Adenylyl-sulfate kinase (205 aa).

35-42 (GLSGAGKS) is an ATP binding site. S109 functions as the Phosphoserine intermediate in the catalytic mechanism.

The protein belongs to the APS kinase family.

The catalysed reaction is adenosine 5'-phosphosulfate + ATP = 3'-phosphoadenylyl sulfate + ADP + H(+). It participates in sulfur metabolism; hydrogen sulfide biosynthesis; sulfite from sulfate: step 2/3. Its function is as follows. Catalyzes the synthesis of activated sulfate. The polypeptide is Adenylyl-sulfate kinase (Acaryochloris marina (strain MBIC 11017)).